The sequence spans 172 residues: Small ribosomal subunit protein uS5 (172 aa).

The S5 DRBM domain occupies Leu-17–Val-80.

This sequence belongs to the universal ribosomal protein uS5 family. Part of the 30S ribosomal subunit. Contacts proteins S4 and S8.

Functionally, with S4 and S12 plays an important role in translational accuracy. Located at the back of the 30S subunit body where it stabilizes the conformation of the head with respect to the body. In Verminephrobacter eiseniae (strain EF01-2), this protein is Small ribosomal subunit protein uS5.